A 251-amino-acid polypeptide reads, in one-letter code: Capsid protein (251 aa).

The disordered stretch occupies residues 1-29 (MPKRDAPWRSMAGTSKVSRNANYSPRSGI). The short motif at 3 to 20 (KRDAPWRSMAGTSKVSRN) is the Bipartite nuclear localization signal element. Positions 12 to 25 (AGTSKVSRNANYSP) are enriched in polar residues. The Nuclear localization signal motif lies at 35-49 (KAAEWVNRPMYRKPR). Residues 63-80 (CEGPCKVQSFEQRHDILH) fold into a zinc finger. Residues 96-117 (ITHRVGKRFCVKSVYILGKIWM) carry the Nuclear export signal motif. The short motif at 195–242 (RRFWKVNNHVVYNHQEAGKYENHTENALLLYMACTHASNPVYATLKIR) is the Bipartite nuclear localization signal element.

It belongs to the geminiviridae capsid protein family. Homomultimer. Binds to single-stranded and double-stranded viral DNA. Interacts (via nuclear localization signals) with host importin alpha-1a.

It localises to the virion. The protein localises to the host nucleus. Functionally, encapsidates the viral DNA into characteristic twinned ('geminate') particles. Binds the genomic viral ssDNA and shuttles it into and out of the cell nucleus. The CP of bipartite geminiviruses is not required for cell-to-cell or systemic movement. The sequence is that of Capsid protein from Solanum tuberosum (Potato).